A 782-amino-acid polypeptide reads, in one-letter code: Anoctamin-9 (782 aa).

Residues 1 to 198 (MQGEESLRIL…LYFVWLGWYT (198 aa)) are Cytoplasmic-facing. The chain crosses the membrane as a helical span at residues 199-219 (YMLVPAALTGLLVFLSGFSLF). Topologically, residues 220–264 (EASQISKEICEAHDILMCPLGDHSRRYQRLSETCTFAKLTHLFDN) are extracellular. The residue at position 250 (Ser250) is a Phosphoserine; by PKA. Residues 265 to 285 (DGTVVFAIFMALWATVFLEIW) traverse the membrane as a helical segment. Residues 286-331 (KRQRARVVLHWDLYVWDEEQEEMALQLINCPDYKLRPYQHSYLRST) lie on the Cytoplasmic side of the membrane. The chain crosses the membrane as a helical span at residues 332–352 (VILVLTLLMICLMIGMAHVLV). Residues 353 to 373 (VYRVLASALFSSSAVPFLEEQ) are Extracellular-facing. Residues 374-394 (VTTAVVVTGALVHYVTIIIMT) traverse the membrane as a helical segment. Over 395-423 (KINRCVALKLCDFEMPRTFSERESRFTIR) the chain is Cytoplasmic. The helical transmembrane segment at 424-444 (FFTLQFFTHFSSLIYIAFILG) threads the bilayer. The Extracellular segment spans residues 445–552 (RINGHPGKST…EMMIQYGFTT (108 aa)). Residues 553–573 (IFVAAFPLAPLLALFSNLVEI) traverse the membrane as a helical segment. Residues 574-604 (RLDAIKMVWLQRRLVPRKAKDIGTWLQVLET) are Cytoplasmic-facing. The chain crosses the membrane as a helical span at residues 605-625 (IGVLAVIANGMVIAFTSEFIP). The Extracellular segment spans residues 626 to 703 (RVVYKYRYSP…QFWFLLAIRL (78 aa)). Asn641, Asn652, Asn674, and Asn690 each carry an N-linked (GlcNAc...) asparagine glycan. The chain crosses the membrane as a helical span at residues 704 to 724 (AFVILFEHVALCIKLIAAWFV). Residues 725 to 782 (PDIPQSVKNKVLEVKYQRLREKMWHGRQRLGGVGAGSRPPMPAHPTPASIFSARSTDV) are Cytoplasmic-facing. The segment at 756 to 782 (GVGAGSRPPMPAHPTPASIFSARSTDV) is disordered.

Belongs to the anoctamin family. Phosphorylated on serine residues by cAMP-dependent protein kinase A (PKA) which is essential for activation of its cation channel activity. As to expression, expressed in the kidney. Expressed in the olfactory epithelium.

Its subcellular location is the cell membrane. The protein localises to the endoplasmic reticulum. The catalysed reaction is a 1,2-diacyl-sn-glycero-3-phospho-L-serine(in) = a 1,2-diacyl-sn-glycero-3-phospho-L-serine(out). The enzyme catalyses a beta-D-galactosyl-(1&lt;-&gt;1')-N-acylsphing-4-enine(out) = a beta-D-galactosyl-(1&lt;-&gt;1')-N-acylsphing-4-enine(in). It carries out the reaction a 1,2-diacyl-sn-glycero-3-phosphocholine(in) = a 1,2-diacyl-sn-glycero-3-phosphocholine(out). It catalyses the reaction Ca(2+)(in) = Ca(2+)(out). The catalysed reaction is Na(+)(in) = Na(+)(out). The enzyme catalyses K(+)(in) = K(+)(out). Its activity is regulated as follows. Cation channel activity is activated via phosphorylation on serine residues by cAMP-dependent protein kinase A (PKA). In terms of biological role, PKA-activated nonselective cation channel. Discriminates poorly among cations but is more permeable to Ca(2+) ions than to monovalent cations. Acts as a calcium-activated calcium permeable channel which may operate as a endoplasmic reticulum (ER) Ca(2+)-leak channel, reducing the loading of the ER Ca(2+) store. Regulates intracellular Ca2+ signals, ion channel activity, and cytokine release in the renal tissue. Plays an important role in olfaction, amplifying cAMP-evoked cyclic nucleotide-gated (CNG) channel currents in the olfactory sensory neurons. Has calcium-dependent phospholipid scramblase activity; scrambles phosphatidylserine, phosphatidylcholine and galactosylceramide. Does not exhibit calcium-activated chloride channel (CaCC) activity. Can inhibit the activity of ANO1. The sequence is that of Anoctamin-9 (ANO9) from Homo sapiens (Human).